A 770-amino-acid polypeptide reads, in one-letter code: Multifunctional tryptophan biosynthesis protein (770 aa).

The region spanning 25–225 (NVILIDNYDS…LKLTAGTWEG (201 aa)) is the Glutamine amidotransferase type-1 domain. 76-78 (GPG) serves as a coordination point for L-glutamine. The Nucleophile; for GATase activity role is filled by C104. L-glutamine-binding positions include Q108 and 154 to 155 (SL). Active-site for GATase activity residues include H199 and E201. The segment at 228-251 (KHFGEQSSTTKATVPSNPPPKTDK) is disordered. Over residues 232 to 242 (EQSSTTKATVP) the composition is skewed to polar residues. Residues 255 to 519 (ILERIYDHRR…DTATFIAELL (265 aa)) are indole-3-glycerol phosphate synthase. The N-(5'-phosphoribosyl)anthranilate isomerase stretch occupies residues 535–770 (LVKICGTRSE…RAFVQAVRGL (236 aa)).

It catalyses the reaction N-(5-phospho-beta-D-ribosyl)anthranilate = 1-(2-carboxyphenylamino)-1-deoxy-D-ribulose 5-phosphate. It carries out the reaction 1-(2-carboxyphenylamino)-1-deoxy-D-ribulose 5-phosphate + H(+) = (1S,2R)-1-C-(indol-3-yl)glycerol 3-phosphate + CO2 + H2O. The enzyme catalyses chorismate + L-glutamine = anthranilate + pyruvate + L-glutamate + H(+). Its pathway is amino-acid biosynthesis; L-tryptophan biosynthesis; L-tryptophan from chorismate: step 1/5. It participates in amino-acid biosynthesis; L-tryptophan biosynthesis; L-tryptophan from chorismate: step 3/5. It functions in the pathway amino-acid biosynthesis; L-tryptophan biosynthesis; L-tryptophan from chorismate: step 4/5. Functionally, trifunctional enzyme bearing the Gln amidotransferase (GATase) domain of anthranilate synthase, indole-glycerolphosphate synthase, and phosphoribosylanthranilate isomerase activities. The chain is Multifunctional tryptophan biosynthesis protein (trpC) from Aspergillus niger.